Reading from the N-terminus, the 220-residue chain is ATP synthase F(0) complex subunit a (220 aa).

6 helical membrane-spanning segments follow: residues 12 to 32 (PTLLGVPLIAVAMMFPWTLLP), 69 to 89 (WAMILMSLNLLGLLPYTFTPT), 91 to 111 (QLSLNMGLAIPFWLATVLLGL), 130 to 150 (LLIPILIIIETISLLIRPFAL), 158 to 178 (LTAGHLLMQLIATAAFVLLPM), and 183 to 203 (ALLTTLVLFLLTLLEIAVAMI).

Belongs to the ATPase A chain family. As to quaternary structure, component of the ATP synthase complex composed at least of ATP5F1A/subunit alpha, ATP5F1B/subunit beta, ATP5MC1/subunit c (homooctomer), MT-ATP6/subunit a, MT-ATP8/subunit 8, ATP5ME/subunit e, ATP5MF/subunit f, ATP5MG/subunit g, ATP5MK/subunit k, ATP5MJ/subunit j, ATP5F1C/subunit gamma, ATP5F1D/subunit delta, ATP5F1E/subunit epsilon, ATP5PF/subunit F6, ATP5PB/subunit b, ATP5PD/subunit d, ATP5PO/subunit OSCP. ATP synthase complex consists of a soluble F(1) head domain (subunits alpha(3) and beta(3)) - the catalytic core - and a membrane F(0) domain - the membrane proton channel (subunits c, a, 8, e, f, g, k and j). These two domains are linked by a central stalk (subunits gamma, delta, and epsilon) rotating inside the F1 region and a stationary peripheral stalk (subunits F6, b, d, and OSCP). Interacts with DNAJC30; interaction is direct.

It is found in the mitochondrion inner membrane. It catalyses the reaction H(+)(in) = H(+)(out). Subunit a, of the mitochondrial membrane ATP synthase complex (F(1)F(0) ATP synthase or Complex V) that produces ATP from ADP in the presence of a proton gradient across the membrane which is generated by electron transport complexes of the respiratory chain. ATP synthase complex consist of a soluble F(1) head domain - the catalytic core - and a membrane F(1) domain - the membrane proton channel. These two domains are linked by a central stalk rotating inside the F(1) region and a stationary peripheral stalk. During catalysis, ATP synthesis in the catalytic domain of F(1) is coupled via a rotary mechanism of the central stalk subunits to proton translocation. With the subunit c (ATP5MC1), forms the proton-conducting channel in the F(0) domain, that contains two crucial half-channels (inlet and outlet) that facilitate proton movement from the mitochondrial intermembrane space (IMS) into the matrix. Protons are taken up via the inlet half-channel and released through the outlet half-channel, following a Grotthuss mechanism. The polypeptide is ATP synthase F(0) complex subunit a (Latimeria chalumnae (Coelacanth)).